A 570-amino-acid polypeptide reads, in one-letter code: Ferroportin (570 aa).

Residues 1-23 (MTKSRDQTHQEGCCGSLANYLTS) are Cytoplasmic-facing. Residues 24 to 53 (AKFLLYLGHSLSTWGDRMWHFAVSVFLVEL) traverse the membrane as a helical segment. D39 and H43 together coordinate Fe cation. The Extracellular segment spans residues 54-57 (YGNS). Residues 58–84 (LLLTAVYGLVVAGSVLVLGAIIGDWVD) traverse the membrane as a helical segment. At 85 to 87 (KNA) the chain is on the cytoplasmic side. Residues 88-118 (RLKVAQTSLVVQNVSVILCGIILMMVFLHKN) form a helical membrane-spanning segment. The Extracellular portion of the chain corresponds to 119–126 (ELLNMYHG). Residues 127–162 (WVLTVCYILIITIANIANLASTATAITIQRDWIVVV) form a helical membrane-spanning segment. The Cytoplasmic segment spans residues 163 to 164 (AG). Residues 165 to 195 (ENRSRLADMNATIRRIDQLTNILAPMAVGQI) form a helical membrane-spanning segment. Over 196–202 (MTFGSPV) the chain is Extracellular. The chain crosses the membrane as a helical span at residues 203–229 (IGCGFISGWNLVSMCVEYFLLWKVYQK). The Cytoplasmic segment spans residues 230–306 (TPALAVKAAL…DGWVSYYNQP (77 aa)). Residues 307 to 333 (VFLAGMGLAFLYMTVLGFDCITTGYAY) form a helical membrane-spanning segment. C326 is a binding site for Fe cation. At 334–338 (TQGLS) the chain is on the extracellular side. The chain crosses the membrane as a helical span at residues 339-366 (GSILSVLMGASAITGIMGTVAFTWLRRK). Residues 367-368 (CG) are Cytoplasmic-facing. A helical membrane pass occupies residues 369 to 391 (LVRTGLFSGLAQLSCLILCVISV). Topologically, residues 392–452 (FMPGSPLDLS…EMSTKSVPII (61 aa)) are extracellular. A helical membrane pass occupies residues 453-482 (SVSLLFAGVIAARIGLWSFDLTVTQLLQEN). The Cytoplasmic portion of the chain corresponds to 483–487 (VIESE). Residues 488 to 512 (RGIINGVQNSMNYLLDLLHFIMVIL) traverse the membrane as a helical segment. Residue H506 participates in Fe cation binding. Topologically, residues 513 to 515 (APN) are extracellular. A helical membrane pass occupies residues 516 to 541 (PEAFGLLVLISVSFVAMGHLMYFRFA). At 542–570 (QKTLGNQIFVCAPDEKEVTDESQPNTSVV) the chain is on the cytoplasmic side.

Belongs to the ferroportin (FP) (TC 2.A.100) family. SLC40A subfamily. As to quaternary structure, identified in a complex with STOM. Interacts with HAMP; affinity of the peptide hormone HAMP for SLC40A1 increases by 80-fold in the presence of iron and the interaction promotes SLC40A1 ubiquitination and degradation. Part of a complex composed of SLC40A1/ferroportin, TF/transferrin and HEPH/hephaestin that transfers iron from cells to transferrin. Polyubiquitinated by RNF217; leading to proteasomal degradation. Under conditions of high systemic iron levels, both the hormone peptide hepcidin/HAMP and holo(iron bound)-transferrin/TF induce the ubiquitination, internalization and proteasomal degradation of SLC40A1 to control iron release from cells.

It is found in the cell membrane. The protein resides in the basolateral cell membrane. It carries out the reaction Fe(2+)(in) = Fe(2+)(out). With respect to regulation, during elevated serum iron levels, liver-derived hepcidin/HAMP negatively regulates cell surface SLC40A1 by inducing its ubiquitination, internalization, and degradation. Indeed, hepcidin/HAMP affinity towards ferroportin/SLC40A1 increases by 80-fold in the presence of iron. Functionally, transports Fe(2+) from the inside of a cell to the outside of the cell, playing a key role for maintaining systemic iron homeostasis. Transports iron from intestinal, splenic, hepatic cells, macrophages and erythrocytes into the blood to provide iron to other tissues. Controls therefore dietary iron uptake, iron recycling by macrophages and erythrocytes, and release of iron stores in hepatocytes. When iron is in excess in serum, circulating HAMP/hepcidin levels increase resulting in a degradation of SLC40A1, thus limiting the iron efflux to plasma. In Rattus norvegicus (Rat), this protein is Ferroportin.